A 205-amino-acid chain; its full sequence is Large ribosomal subunit protein uL3 (205 aa).

It belongs to the universal ribosomal protein uL3 family. Part of the 50S ribosomal subunit. Forms a cluster with proteins L14 and L19.

Functionally, one of the primary rRNA binding proteins, it binds directly near the 3'-end of the 23S rRNA, where it nucleates assembly of the 50S subunit. The sequence is that of Large ribosomal subunit protein uL3 from Thermosipho melanesiensis (strain DSM 12029 / CIP 104789 / BI429).